Here is an 81-residue protein sequence, read N- to C-terminus: ATP synthase subunit c (81 aa).

Transmembrane regions (helical) follow at residues Ala-7–Gly-27 and Leu-57–Ala-77.

The protein belongs to the ATPase C chain family. In terms of assembly, F-type ATPases have 2 components, F(1) - the catalytic core - and F(0) - the membrane proton channel. F(1) has five subunits: alpha(3), beta(3), gamma(1), delta(1), epsilon(1). F(0) has four main subunits: a(1), b(1), b'(1) and c(10-14). The alpha and beta chains form an alternating ring which encloses part of the gamma chain. F(1) is attached to F(0) by a central stalk formed by the gamma and epsilon chains, while a peripheral stalk is formed by the delta, b and b' chains.

The protein localises to the cellular thylakoid membrane. In terms of biological role, f(1)F(0) ATP synthase produces ATP from ADP in the presence of a proton or sodium gradient. F-type ATPases consist of two structural domains, F(1) containing the extramembraneous catalytic core and F(0) containing the membrane proton channel, linked together by a central stalk and a peripheral stalk. During catalysis, ATP synthesis in the catalytic domain of F(1) is coupled via a rotary mechanism of the central stalk subunits to proton translocation. Key component of the F(0) channel; it plays a direct role in translocation across the membrane. A homomeric c-ring of between 10-14 subunits forms the central stalk rotor element with the F(1) delta and epsilon subunits. This is ATP synthase subunit c from Nostoc sp. (strain PCC 7120 / SAG 25.82 / UTEX 2576).